The chain runs to 1070 residues: DNA-directed RNA polymerase subunit beta (1070 aa).

Belongs to the RNA polymerase beta chain family. In plastids the minimal PEP RNA polymerase catalytic core is composed of four subunits: alpha, beta, beta', and beta''. When a (nuclear-encoded) sigma factor is associated with the core the holoenzyme is formed, which can initiate transcription.

It localises to the plastid. It is found in the chloroplast. The catalysed reaction is RNA(n) + a ribonucleoside 5'-triphosphate = RNA(n+1) + diphosphate. Its function is as follows. DNA-dependent RNA polymerase catalyzes the transcription of DNA into RNA using the four ribonucleoside triphosphates as substrates. In Platanus occidentalis (Sycamore), this protein is DNA-directed RNA polymerase subunit beta.